Reading from the N-terminus, the 195-residue chain is Segregation and condensation protein B (195 aa).

The interval 169–195 (LEDVAASQENSREAGGRGSIPGHPGEE) is disordered.

It belongs to the ScpB family. In terms of assembly, homodimer. Homodimerization may be required to stabilize the binding of ScpA to the Smc head domains. Component of a cohesin-like complex composed of ScpA, ScpB and the Smc homodimer, in which ScpA and ScpB bind to the head domain of Smc. The presence of the three proteins is required for the association of the complex with DNA.

It is found in the cytoplasm. Its function is as follows. Participates in chromosomal partition during cell division. May act via the formation of a condensin-like complex containing Smc and ScpA that pull DNA away from mid-cell into both cell halves. The chain is Segregation and condensation protein B from Moorella thermoacetica (strain ATCC 39073 / JCM 9320).